The primary structure comprises 191 residues: Thymidylate kinase (191 aa).

7–14 (GVDGAGKS) is a binding site for ATP.

The protein belongs to the thymidylate kinase family.

The enzyme catalyses dTMP + ATP = dTDP + ADP. Functionally, phosphorylation of dTMP to form dTDP in both de novo and salvage pathways of dTTP synthesis. The sequence is that of Thymidylate kinase from Helicobacter pylori (strain P12).